A 102-amino-acid polypeptide reads, in one-letter code: Large ribosomal subunit protein bL21 (102 aa).

It belongs to the bacterial ribosomal protein bL21 family. In terms of assembly, part of the 50S ribosomal subunit. Contacts protein L20.

Functionally, this protein binds to 23S rRNA in the presence of protein L20. The protein is Large ribosomal subunit protein bL21 of Lactiplantibacillus plantarum (strain ATCC BAA-793 / NCIMB 8826 / WCFS1) (Lactobacillus plantarum).